Reading from the N-terminus, the 295-residue chain is MSGALDVLQMKEEDVLKFLAAGTHLGGTNLDFQMEQYIYKRKSDGIYIINLKRTWEKLLLAARAIVAIENPADVSVISSRNTGQRAVLKFAAATGATPIAGRFTPGTFTNQIQAAFREPRLLVVTDPRADHQPLTEASYVNLPTIALCNTDSPLRYVDIAIPCNNKGAHSVGLMWWMLAREVLRMRGTISREHPWEVMPDLYFYRDPEEIEKEEQAAAEKAVTKEEFQGEWTAPAPEFTATQPEVADWSEGVQVPSVPIQQFPTEDWSAQPTTEDWSAAPTAQATEWVGTTTEWS.

Ser-2 is subject to N-acetylserine. Ser-43 carries the post-translational modification Phosphoserine. Residue Lys-52 is modified to N6-acetyllysine. The interval 54-113 (TWEKLLLAARAIVAIENPADVSVISSRNTGQRAVLKFAAATGATPIAGRFTPGTFTNQIQ) is interaction with PPP1R16B. Residue Lys-89 is modified to N6-acetyllysine; alternate. Residue Lys-89 forms a Glycyl lysine isopeptide (Lys-Gly) (interchain with G-Cter in SUMO2); alternate linkage. A Phosphothreonine modification is found at Thr-97. Laminin-binding stretches follow at residues 161-180 (IPCN…MLAR) and 205-229 (RDPE…EFQG). [DE]-W-[ST] repeat units lie at residues 230 to 232 (EWT), 247 to 249 (DWS), 266 to 268 (DWS), 275 to 277 (DWS), and 293 to 295 (EWS). Residues 242 to 295 (QPEVADWSEGVQVPSVPIQQFPTEDWSAQPTTEDWSAAPTAQATEWVGTTTEWS) are laminin-binding. Residues 266-295 (DWSAQPTTEDWSAAPTAQATEWVGTTTEWS) are disordered.

Belongs to the universal ribosomal protein uS2 family. Monomer (37LRP) and homodimer (67LR). Component of the small ribosomal subunit. Mature ribosomes consist of a small (40S) and a large (60S) subunit. The 40S subunit contains about 33 different proteins and 1 molecule of RNA (18S). The 60S subunit contains about 49 different proteins and 3 molecules of RNA (28S, 5.8S and 5S). Interacts with RPS21. Interacts with several laminins including at least LAMB1. Interacts with MDK. The mature dimeric form interacts with PPP1R16B (via its fourth ankyrin repeat). Interacts with PPP1CA only in the presence of PPP1R16B. Acylated. Acylation may be a prerequisite for conversion of the monomeric 37 kDa laminin receptor precursor (37LRP) to the mature dimeric 67 kDa laminin receptor (67LR), and may provide a mechanism for membrane association. Post-translationally, cleaved by stromelysin-3 (ST3) at the cell surface. Cleavage by stromelysin-3 may be a mechanism to alter cell-extracellular matrix interactions.

The protein resides in the cell membrane. It localises to the cytoplasm. The protein localises to the nucleus. Required for the assembly and/or stability of the 40S ribosomal subunit. Required for the processing of the 20S rRNA-precursor to mature 18S rRNA in a late step of the maturation of 40S ribosomal subunits. Also functions as a cell surface receptor for laminin. Plays a role in cell adhesion to the basement membrane and in the consequent activation of signaling transduction pathways. May play a role in cell fate determination and tissue morphogenesis. Also acts as a receptor for several other ligands, including the pathogenic prion protein, viruses, and bacteria. Acts as a PPP1R16B-dependent substrate of PPP1CA. The sequence is that of Small ribosomal subunit protein uS2 from Sus scrofa (Pig).